The following is a 233-amino-acid chain: Hydroxyacylglutathione hydrolase (233 aa).

Histidine 52, histidine 54, aspartate 56, histidine 57, histidine 108, aspartate 125, and histidine 163 together coordinate Zn(2+).

This sequence belongs to the metallo-beta-lactamase superfamily. Glyoxalase II family. In terms of assembly, monomer. Zn(2+) is required as a cofactor.

The enzyme catalyses an S-(2-hydroxyacyl)glutathione + H2O = a 2-hydroxy carboxylate + glutathione + H(+). It functions in the pathway secondary metabolite metabolism; methylglyoxal degradation; (R)-lactate from methylglyoxal: step 2/2. Its function is as follows. Thiolesterase that catalyzes the hydrolysis of S-D-lactoyl-glutathione to form glutathione and D-lactic acid. This chain is Hydroxyacylglutathione hydrolase, found in Histophilus somni (strain 2336) (Haemophilus somnus).